A 391-amino-acid polypeptide reads, in one-letter code: Formate-dependent phosphoribosylglycinamide formyltransferase (391 aa).

N(1)-(5-phospho-beta-D-ribosyl)glycinamide contacts are provided by residues 20–21 and E80; that span reads EL. ATP is bound by residues R112, K153, 158–163, 193–196, and E201; these read SSGKGQ and EGFV. An ATP-grasp domain is found at 117–306; sequence RLAAETLGLP…EFALHVRAIL (190 aa). Mg(2+) contacts are provided by E265 and E277. N(1)-(5-phospho-beta-D-ribosyl)glycinamide contacts are provided by residues D284, K354, and 361 to 362; that span reads RR.

It belongs to the PurK/PurT family. Homodimer.

It catalyses the reaction N(1)-(5-phospho-beta-D-ribosyl)glycinamide + formate + ATP = N(2)-formyl-N(1)-(5-phospho-beta-D-ribosyl)glycinamide + ADP + phosphate + H(+). It functions in the pathway purine metabolism; IMP biosynthesis via de novo pathway; N(2)-formyl-N(1)-(5-phospho-D-ribosyl)glycinamide from N(1)-(5-phospho-D-ribosyl)glycinamide (formate route): step 1/1. In terms of biological role, involved in the de novo purine biosynthesis. Catalyzes the transfer of formate to 5-phospho-ribosyl-glycinamide (GAR), producing 5-phospho-ribosyl-N-formylglycinamide (FGAR). Formate is provided by PurU via hydrolysis of 10-formyl-tetrahydrofolate. The polypeptide is Formate-dependent phosphoribosylglycinamide formyltransferase (Shewanella sp. (strain W3-18-1)).